Consider the following 188-residue polypeptide: uncharacterized protein (188 aa).

This is an uncharacterized protein from Acidianus convivator (ABV).